The sequence spans 172 residues: Myosin regulatory light chain RLC-A (172 aa).

Over residues Met-1–Gln-16 the composition is skewed to basic residues. Positions Met-1–Ser-20 are disordered. Thr-19 is modified (phosphothreonine; by MLCK). Ser-20 bears the Phosphoserine; by MLCK mark. EF-hand domains lie at Ser-29–Asn-64, Asp-98–Arg-133, and Phe-134–Asp-169. Positions 42, 44, 46, and 53 each coordinate Ca(2+).

As to quaternary structure, myosin is a hexamer of 2 heavy chains and 4 light chains. Phosphorylation increases the actin-activated myosin ATPase activity and thereby regulates the contractile activity.

In terms of biological role, myosin regulatory subunit that plays an important role in regulation of both smooth muscle and nonmuscle cell contractile activity via its phosphorylation. Implicated in cytokinesis, receptor capping, and cell locomotion. This chain is Myosin regulatory light chain RLC-A (Rlc-a), found in Rattus norvegicus (Rat).